Reading from the N-terminus, the 297-residue chain is tRNA(Ile)-lysidine synthase (297 aa).

16–21 is an ATP binding site; that stretch reads SGGSDS.

This sequence belongs to the tRNA(Ile)-lysidine synthase family.

The protein resides in the cytoplasm. It carries out the reaction cytidine(34) in tRNA(Ile2) + L-lysine + ATP = lysidine(34) in tRNA(Ile2) + AMP + diphosphate + H(+). In terms of biological role, ligates lysine onto the cytidine present at position 34 of the AUA codon-specific tRNA(Ile) that contains the anticodon CAU, in an ATP-dependent manner. Cytidine is converted to lysidine, thus changing the amino acid specificity of the tRNA from methionine to isoleucine. The sequence is that of tRNA(Ile)-lysidine synthase from Mesomycoplasma hyopneumoniae (strain 232) (Mycoplasma hyopneumoniae).